The following is a 337-amino-acid chain: Porphobilinogen deaminase (337 aa).

The residue at position 254 (Cys-254) is an S-(dipyrrolylmethanemethyl)cysteine.

This sequence belongs to the HMBS family. It depends on dipyrromethane as a cofactor.

The catalysed reaction is 4 porphobilinogen + H2O = hydroxymethylbilane + 4 NH4(+). It participates in porphyrin-containing compound metabolism; protoporphyrin-IX biosynthesis; coproporphyrinogen-III from 5-aminolevulinate: step 2/4. Functionally, tetrapolymerization of the monopyrrole PBG into the hydroxymethylbilane pre-uroporphyrinogen in several discrete steps. The polypeptide is Porphobilinogen deaminase (pda-1) (Neurospora crassa (strain ATCC 24698 / 74-OR23-1A / CBS 708.71 / DSM 1257 / FGSC 987)).